Consider the following 174-residue polypeptide: MGKITLYEDRGFQGRHYECSSDHPNLQPYLSRCNSARVDSGCWMLYEQPNYSGLQYFLRRGDYADHQQWMGLSDSVRSCRLIPHSGSHRIRLYEREDYRGQMIEFTEDCSCLQDRFRFNEIHSLNVLEGSWVLYELSNYRGRQYLLMPGDYRRYQDWGATNARVGSLRRVIDFS.

Beta/gamma crystallin 'Greek key' domains lie at 2–40 (GKIT…RVDS) and 41–83 (GCWM…RLIP). The segment at 84 to 87 (HSGS) is connecting peptide. 2 Beta/gamma crystallin 'Greek key' domains span residues 88–128 (HRIR…NVLE) and 129–171 (GSWV…RRVI).

Belongs to the beta/gamma-crystallin family. As to quaternary structure, monomer.

Crystallins are the dominant structural components of the vertebrate eye lens. The sequence is that of Gamma-crystallin D (CRYGD) from Homo sapiens (Human).